The chain runs to 4763 residues: Nonribosomal peptide synthetase sidC (4763 aa).

Residues 1-24 (MAGTANPADEGLTGPTETTNHINS) form a disordered region. Polar residues predominate over residues 15 to 24 (PTETTNHINS). Positions 296 to 815 (STVAEHSTLT…SSGKVDRNSI (520 aa)) are adenylation 1. A Carrier 1 domain is found at 853–930 (EKALELRTLV…GLLTLILNGK (78 aa)). Position 890 is an O-(pantetheine 4'-phosphoryl)serine (S890). The condensation 1 stretch occupies residues 1003-1396 (TRSYIYHSVI…DIIAFILQNP (394 aa)). An adenylation 2 region spans residues 1398–1951 (GDFENALLYT…AKTDRRALQA (554 aa)). The Carrier 2 domain maps to 1979-2055 (LVASDAMEKI…DLARLCTSSS (77 aa)). At S2016 the chain carries O-(pantetheine 4'-phosphoryl)serine. The condensation 2 stretch occupies residues 2092–2423 (TPIQESLLSE…HIHAREVRRM (332 aa)). The segment at 2556-3070 (ELNAREHPEW…MSGKANIKEL (515 aa)) is adenylation 3. The region spanning 3099–3175 (RPLSSDEEAV…QLAQLPRKST (77 aa)) is the Carrier 3 domain. Position 3136 is an O-(pantetheine 4'-phosphoryl)serine (S3136). The interval 3217-3626 (PLQEGLVARS…DDIALDSFSL (410 aa)) is condensation 3. The region spanning 3647–3720 (SATETKIRDL…ALAEHVDERS (74 aa)) is the Carrier 4 domain. At S3681 the chain carries O-(pantetheine 4'-phosphoryl)serine. The tract at residues 3761–4093 (TPLQAGMITR…SLFDTLFVFQ (333 aa)) is condensation 4. One can recognise a Carrier 5 domain in the interval 4204-4277 (PAHESIIRDV…GISARIISPV (74 aa)). S4238 bears the O-(pantetheine 4'-phosphoryl)serine mark. Residues 4344–4593 (ERIDSGKLEE…PCLNVTPFTF (250 aa)) form a condensation 5 region.

It belongs to the NRP synthetase family.

It functions in the pathway siderophore biosynthesis. Functionally, nonribosomal peptide synthase; part of the siderophore biosynthetic pathway. Aspergillus fumigatus produces four types of siderophores, low-molecular-mass iron chelators, including excreted fusarinine C (FsC) and triacetylfusarinine C (TAFC) for iron uptake; and intacellular ferricrocin (FC) for hyphal and hydroxyferricrocin (HFC) for conidial iron distribution and storage. TAFC consists of three N(2)-acetyl-N(5)-anhydromevalonyl-N(5)-hydroxyornithine residues cyclically linked by ester bonds; FC is a cyclic hexapeptide with the structure Gly-Ser-Gly-(N(5)-acetyl-N(5)-hydroxyornithine)x3. The biosynthesis of all four siderophores depends on the hydroxylation of ornithine, catalyzed by the monooxygenase sidA. Subsequently, the pathways for biosynthesis of extra- and intracellular siderophores split. For biosynthesis of extracellular siderophores, the transacylase sidF transfers anhydromevalonyl to N(5)-hydroxyornithine. The required anhydromevalonyl-CoA moiety is derived from mevalonate by CoA ligation and dehydration catalyzed by sidI and sidH respectively. The acetylation of N(5)-hydroxyornithine for FC biosynthesis involves the constitutively expressed sidL. FC is hydroxylated to HFC by an as yet uncharacterized enzyme during conidiation. Assembly of fusarinine C (FsC) and FC is catalyzed by two different nonribosomal peptide synthetases (NRPS), sidD and sidC respectively. Subsequently, sidG catalyzes N2-acetylation of FsC for forming TAFC. Both extra- and intracellular siderophores are crucial for growth during iron limitation and virulence. The protein is Nonribosomal peptide synthetase sidC of Aspergillus fumigatus (strain ATCC MYA-4609 / CBS 101355 / FGSC A1100 / Af293) (Neosartorya fumigata).